The following is a 152-amino-acid chain: Siroheme decarboxylase NirD subunit (152 aa).

This sequence belongs to the Ahb/Nir family. As to quaternary structure, probably forms a complex composed of NirD, NirL, NirG and NirH. All proteins are required for the total conversion of siroheme to didecarboxysiroheme.

It carries out the reaction siroheme + 2 H(+) = 12,18-didecarboxysiroheme + 2 CO2. Its pathway is porphyrin-containing compound metabolism. In terms of biological role, involved in heme d1 biosynthesis. Catalyzes the decarboxylation of siroheme into didecarboxysiroheme. The chain is Siroheme decarboxylase NirD subunit from Stutzerimonas stutzeri (Pseudomonas stutzeri).